Reading from the N-terminus, the 122-residue chain is Small ribosomal subunit protein uS12 (122 aa).

The disordered stretch occupies residues Met1 to Leu24. The span at Ile8–Thr20 shows a compositional bias: basic residues. Asp89 is subject to 3-methylthioaspartic acid.

The protein belongs to the universal ribosomal protein uS12 family. Part of the 30S ribosomal subunit. Contacts proteins S8 and S17. May interact with IF1 in the 30S initiation complex.

In terms of biological role, with S4 and S5 plays an important role in translational accuracy. Its function is as follows. Interacts with and stabilizes bases of the 16S rRNA that are involved in tRNA selection in the A site and with the mRNA backbone. Located at the interface of the 30S and 50S subunits, it traverses the body of the 30S subunit contacting proteins on the other side and probably holding the rRNA structure together. The combined cluster of proteins S8, S12 and S17 appears to hold together the shoulder and platform of the 30S subunit. The chain is Small ribosomal subunit protein uS12 from Natranaerobius thermophilus (strain ATCC BAA-1301 / DSM 18059 / JW/NM-WN-LF).